A 135-amino-acid polypeptide reads, in one-letter code: Small ribosomal subunit protein bS16m (135 aa).

A mitochondrion-targeting transit peptide spans 1 to 34; sequence MVQLTTIFCKAYHGGHLTIRLALGGCTNRPFYRI.

Belongs to the bacterial ribosomal protein bS16 family. In terms of assembly, component of the mitochondrial ribosome small subunit (28S) which comprises a 12S rRNA and about 30 distinct proteins.

Its subcellular location is the mitochondrion. The chain is Small ribosomal subunit protein bS16m (Mrps16) from Mus musculus (Mouse).